The primary structure comprises 314 residues: Olfactory receptor 5G29 (314 aa).

Residues 1-25 (MEEKNQTIVMEFFFLGLTDHLYQKI) lie on the Extracellular side of the membrane. The N-linked (GlcNAc...) asparagine glycan is linked to Asn-5. The chain crosses the membrane as a helical span at residues 26–46 (ALFITILFVYLVTLGGNLGMI). Topologically, residues 47–54 (TLIWADPR) are cytoplasmic. The chain crosses the membrane as a helical span at residues 55–75 (LHTPMYFFLSHLSFVDMCSSS). Over 76 to 99 (SIAPKMLCDIFAEEKRISFMGCAA) the chain is Extracellular. Cys-97 and Cys-189 form a disulfide bridge. Residues 100 to 120 (QMWFFGFFVGTECFLLASMAY) traverse the membrane as a helical segment. Residues 121–133 (DRYTAICKPLLYT) lie on the Cytoplasmic side of the membrane. The chain crosses the membrane as a helical span at residues 134-154 (LLMSQRVCVHLVVGPYVFAII). Topologically, residues 155 to 196 (NITTHTTLAFCLPFCGSNTINHFFCDVSPLLSLACADSWVNK) are extracellular. A helical transmembrane segment spans residues 197 to 217 (VVLFVLSGAIGVFSGLIIIVS). Residues 218-237 (YVSILMTIFKIQTADGKQKA) lie on the Cytoplasmic side of the membrane. The helical transmembrane segment at 238-258 (FSTCSSHLSAVSILYGTLFFI) threads the bilayer. Over 259–271 (YVRPSASFSLNIN) the chain is Extracellular. Residues 272 to 292 (KMISLFYTVVIPMLNPLIYSL) traverse the membrane as a helical segment. Residues 293 to 312 (RNKEVKGAFRRKVQKKHFPA) are Cytoplasmic-facing.

This sequence belongs to the G-protein coupled receptor 1 family.

The protein localises to the cell membrane. Functionally, potential odorant receptor. The polypeptide is Olfactory receptor 5G29 (Mus musculus (Mouse)).